We begin with the raw amino-acid sequence, 224 residues long: UPF0173 metal-dependent hydrolase STH3160 (224 aa).

It belongs to the UPF0173 family.

This chain is UPF0173 metal-dependent hydrolase STH3160, found in Symbiobacterium thermophilum (strain DSM 24528 / JCM 14929 / IAM 14863 / T).